The following is a 95-amino-acid chain: Large ribosomal subunit protein bL27 (95 aa).

Positions 1-8 (MEMNLQFF) are excised as a propeptide. Residues 1 to 34 (MEMNLQFFSHHKGGGSTSNGRDSAGRRLGTKRAD) are disordered.

This sequence belongs to the bacterial ribosomal protein bL27 family. Post-translationally, the N-terminus is cleaved by ribosomal processing cysteine protease Prp.

The protein is Large ribosomal subunit protein bL27 of Pediococcus pentosaceus (strain ATCC 25745 / CCUG 21536 / LMG 10740 / 183-1w).